We begin with the raw amino-acid sequence, 246 residues long: Agamous-like MADS-box protein AGL5 (246 aa).

In terms of domain architecture, MADS-box spans 18 to 72 (RGKIEIKRIENTTNRQVTFCKRRNGLLKKAYELSVLCDAEVALVIFSTRGRLYEY). Residues 102–192 (TQYYQQEASK…RSKITERTGL (91 aa)) form the K-box domain.

As to quaternary structure, interacts with AGL15 and AGL16.

It localises to the nucleus. Functionally, probable transcription factor. Interacts genetically with TT16/AGL32 in a partially antagonistic manner during flower development. Is essential for the coordination of cell divisions in ovule, seed coat development and endosperm formation. In Arabidopsis thaliana (Mouse-ear cress), this protein is Agamous-like MADS-box protein AGL5 (AGL5).